We begin with the raw amino-acid sequence, 175 residues long: Translation initiation factor IF-3 (175 aa).

Belongs to the IF-3 family. Monomer.

Its subcellular location is the cytoplasm. In terms of biological role, IF-3 binds to the 30S ribosomal subunit and shifts the equilibrium between 70S ribosomes and their 50S and 30S subunits in favor of the free subunits, thus enhancing the availability of 30S subunits on which protein synthesis initiation begins. This is Translation initiation factor IF-3 from Chromobacterium violaceum (strain ATCC 12472 / DSM 30191 / JCM 1249 / CCUG 213 / NBRC 12614 / NCIMB 9131 / NCTC 9757 / MK).